Reading from the N-terminus, the 879-residue chain is Alanine--tRNA ligase (879 aa).

Residues H566, H570, C668, and H672 each coordinate Zn(2+).

Belongs to the class-II aminoacyl-tRNA synthetase family. The cofactor is Zn(2+).

The protein localises to the cytoplasm. The enzyme catalyses tRNA(Ala) + L-alanine + ATP = L-alanyl-tRNA(Ala) + AMP + diphosphate. Its function is as follows. Catalyzes the attachment of alanine to tRNA(Ala) in a two-step reaction: alanine is first activated by ATP to form Ala-AMP and then transferred to the acceptor end of tRNA(Ala). Also edits incorrectly charged Ser-tRNA(Ala) and Gly-tRNA(Ala) via its editing domain. The protein is Alanine--tRNA ligase of Listeria monocytogenes serovar 1/2a (strain ATCC BAA-679 / EGD-e).